The following is a 482-amino-acid chain: Beta-1,3-glucan-binding protein 2 (482 aa).

Positions 1 to 18 (MWIKSVCLFATIAGCLGQ) are cleaved as a signal peptide. Residues 23–122 (YKVPDAKLEA…GEWTVTEFVN (100 aa)) form the CBM39 domain. N124 carries an N-linked (GlcNAc...) asparagine glycan. A disordered region spans residues 127 to 153 (VVDTSTAPPPVAPAVSEEDQSPGPQWR). Positions 128 to 482 (VDTSTAPPPV…KVDYVRVYAL (355 aa)) constitute a GH16 domain. N-linked (GlcNAc...) asparagine glycosylation occurs at N189.

In terms of assembly, monomer. In terms of processing, N-glycosylated. In terms of tissue distribution, cuticle and fat body.

Its subcellular location is the secreted. Involved in the recognition of invading microorganisms. Binds specifically to beta-1,3-glucan and lipoteichoic acid and causes aggregation of invading microorganisms. Binding to beta-1,3-glucan activates the phenoloxidase cascade. The sequence is that of Beta-1,3-glucan-binding protein 2 from Manduca sexta (Tobacco hawkmoth).